A 177-amino-acid chain; its full sequence is ATP synthase subunit delta (177 aa).

It belongs to the ATPase delta chain family. As to quaternary structure, F-type ATPases have 2 components, F(1) - the catalytic core - and F(0) - the membrane proton channel. F(1) has five subunits: alpha(3), beta(3), gamma(1), delta(1), epsilon(1). F(0) has three main subunits: a(1), b(2) and c(10-14). The alpha and beta chains form an alternating ring which encloses part of the gamma chain. F(1) is attached to F(0) by a central stalk formed by the gamma and epsilon chains, while a peripheral stalk is formed by the delta and b chains.

The protein resides in the cell inner membrane. Functionally, f(1)F(0) ATP synthase produces ATP from ADP in the presence of a proton or sodium gradient. F-type ATPases consist of two structural domains, F(1) containing the extramembraneous catalytic core and F(0) containing the membrane proton channel, linked together by a central stalk and a peripheral stalk. During catalysis, ATP synthesis in the catalytic domain of F(1) is coupled via a rotary mechanism of the central stalk subunits to proton translocation. This protein is part of the stalk that links CF(0) to CF(1). It either transmits conformational changes from CF(0) to CF(1) or is implicated in proton conduction. The sequence is that of ATP synthase subunit delta from Cronobacter sakazakii (strain ATCC BAA-894) (Enterobacter sakazakii).